Reading from the N-terminus, the 79-residue chain is D-alanyl carrier protein (79 aa).

One can recognise a Carrier domain in the interval 1-77; the sequence is MDVKETILNI…KIISGVVELM (77 aa). Ser35 carries the O-(pantetheine 4'-phosphoryl)serine modification.

Belongs to the DltC family. 4'-phosphopantetheine is transferred from CoA to a specific serine of apo-DCP.

Its subcellular location is the cytoplasm. It participates in cell wall biogenesis; lipoteichoic acid biosynthesis. Functionally, carrier protein involved in the D-alanylation of lipoteichoic acid (LTA). The loading of thioester-linked D-alanine onto DltC is catalyzed by D-alanine--D-alanyl carrier protein ligase DltA. The DltC-carried D-alanyl group is further transferred to cell membrane phosphatidylglycerol (PG) by forming an ester bond, probably catalyzed by DltD. D-alanylation of LTA plays an important role in modulating the properties of the cell wall in Gram-positive bacteria, influencing the net charge of the cell wall. This chain is D-alanyl carrier protein, found in Streptococcus suis (strain 98HAH33).